The primary structure comprises 179 residues: Adenylyl-sulfate kinase (179 aa).

An ATP-binding site is contributed by 13-20 (GLSGAGKS). Catalysis depends on serine 87, which acts as the Phosphoserine intermediate.

It belongs to the APS kinase family.

The catalysed reaction is adenosine 5'-phosphosulfate + ATP = 3'-phosphoadenylyl sulfate + ADP + H(+). Its pathway is sulfur metabolism; hydrogen sulfide biosynthesis; sulfite from sulfate: step 2/3. In terms of biological role, catalyzes the synthesis of activated sulfate. This is Adenylyl-sulfate kinase from Paraburkholderia xenovorans (strain LB400).